The chain runs to 1516 residues: Myosin-14 (1516 aa).

One can recognise a Myosin N-terminal SH3-like domain in the interval 7–56 (NVGSCVWVEDPEVAWIDGEVIEVKGSDIKVKCTSGKTVAIKVSSAYPKDV). Residues 61-738 (SGVDDMTRLA…QMADLDARRN (678 aa)) form the Myosin motor domain. ATP is bound by residues 155–162 (GESGAGKT) and 208–216 (NNNSSRFGK). 4 actin-binding regions span residues 494-528 (LIEK…YQTF), 530-553 (DHKH…AGDV), 588-612 (FPLL…KQQL), and 612-634 (LVTL…KPNN). IQ domains are found at residues 741-770 (LGRA…VATN), 764-793 (LRKV…DAAV), 789-818 (RDAA…AAVS), 812-841 (LYFA…DKAA), 837-866 (QDKA…AAIT), and 860-889 (LKKA…AAKE). The stretch at 890-1056 (TGVLEAAKSK…ENKILRQKSL (167 aa)) forms a coiled coil. The disordered stretch occupies residues 1061–1085 (GHLPPTPVKGSQNGHFSSKESPFNG). A compositionally biased stretch (polar residues) spans 1069–1084 (KGSQNGHFSSKESPFN). Positions 1158–1463 (DRLVQMIGSA…IANMRVLMTE (306 aa)) constitute a Dilute domain.

This sequence belongs to the TRAFAC class myosin-kinesin ATPase superfamily. Myosin family. Plant myosin class XI subfamily. As to quaternary structure, homodimer.

Functionally, myosin heavy chain that is required for the cell cycle-regulated transport of various organelles and proteins for their segregation. Functions by binding with its tail domain to receptor proteins on organelles and exerting force with its N-terminal motor domain against actin filaments, thereby transporting its cargo along polarized actin cables. This Arabidopsis thaliana (Mouse-ear cress) protein is Myosin-14 (XI-H).